The following is a 410-amino-acid chain: Arginine deiminase (410 aa).

Cys399 serves as the catalytic Amidino-cysteine intermediate.

This sequence belongs to the arginine deiminase family.

It is found in the cytoplasm. It catalyses the reaction L-arginine + H2O = L-citrulline + NH4(+). It functions in the pathway amino-acid degradation; L-arginine degradation via ADI pathway; carbamoyl phosphate from L-arginine: step 1/2. The chain is Arginine deiminase from Listeria monocytogenes serotype 4a (strain HCC23).